Here is a 205-residue protein sequence, read N- to C-terminus: MPELVVRHLGLVEYQPTLESMRQLTRERDERTADEIWLLQHPKVFTQGQAGKAEHLLAPGDIPVVQVERGGQVTYHGPGQLVAYLMLDLRRLDLGVRELVTAMEQSLVDLLASYGIEAAPKADAPGVYVAGDKIASLGLRVSRGCSFHGLALNVDMDMTPFLRINPCGYAGLKMVQMRDLLPSPPAFDEVSQRLEQALRARLGYA.

A BPL/LPL catalytic domain is found at Glu-30–Ala-205. Residues Arg-69 to His-76, Ser-136 to Gly-138, and Gly-149 to Ala-151 contribute to the substrate site. The Acyl-thioester intermediate role is filled by Cys-167.

The protein belongs to the LipB family.

The protein localises to the cytoplasm. The catalysed reaction is octanoyl-[ACP] + L-lysyl-[protein] = N(6)-octanoyl-L-lysyl-[protein] + holo-[ACP] + H(+). It participates in protein modification; protein lipoylation via endogenous pathway; protein N(6)-(lipoyl)lysine from octanoyl-[acyl-carrier-protein]: step 1/2. Catalyzes the transfer of endogenously produced octanoic acid from octanoyl-acyl-carrier-protein onto the lipoyl domains of lipoate-dependent enzymes. Lipoyl-ACP can also act as a substrate although octanoyl-ACP is likely to be the physiological substrate. The chain is Octanoyltransferase from Ectopseudomonas mendocina (strain ymp) (Pseudomonas mendocina).